Reading from the N-terminus, the 208-residue chain is Small ribosomal subunit protein eS8 (208 aa).

Positions 1 to 37 are disordered; it reads MGISRDNWHKRRKTGGKRKPYHKKRKYEPGRPAANTK. The segment covering 8-26 has biased composition (basic residues); the sequence is WHKRRKTGGKRKPYHKKRK.

It belongs to the eukaryotic ribosomal protein eS8 family. As to quaternary structure, component of the small ribosomal subunit. Identified in a IGF2BP1-dependent mRNP granule complex containing untranslated mRNAs. Part of the small subunit (SSU) processome, composed of more than 70 proteins and the RNA chaperone small nucleolar RNA (snoRNA) U3.

Its subcellular location is the cytoplasm. It localises to the membrane. The protein localises to the nucleus. The protein resides in the nucleolus. Its function is as follows. Component of the small ribosomal subunit. The ribosome is a large ribonucleoprotein complex responsible for the synthesis of proteins in the cell. Part of the small subunit (SSU) processome, first precursor of the small eukaryotic ribosomal subunit. During the assembly of the SSU processome in the nucleolus, many ribosome biogenesis factors, an RNA chaperone and ribosomal proteins associate with the nascent pre-rRNA and work in concert to generate RNA folding, modifications, rearrangements and cleavage as well as targeted degradation of pre-ribosomal RNA by the RNA exosome. This chain is Small ribosomal subunit protein eS8 (rps8), found in Xenopus laevis (African clawed frog).